The sequence spans 442 residues: Adenylosuccinate synthetase (442 aa).

GTP is bound by residues 25–31, 53–55, and Lys62; these read GDEGKGK and GHT. Asp26 (proton acceptor) is an active-site residue. Mg(2+) is bound by residues Asp26 and Gly53. IMP is bound by residues 26 to 29 and 51 to 54; these read DEGK and NAGH. His54 serves as the catalytic Proton donor. 4 residues coordinate IMP: Thr141, Arg155, Asn232, and Thr247. Thr307 is a GTP binding site. Residue 307-313 coordinates substrate; that stretch reads TTTKRPR. Arg311 provides a ligand contact to IMP. Residues Arg313, 339–341, and 425–427 each bind GTP; these read KLD and GVG.

This sequence belongs to the adenylosuccinate synthetase family. As to quaternary structure, homodimer. Mg(2+) serves as cofactor.

It is found in the cytoplasm. It carries out the reaction IMP + L-aspartate + GTP = N(6)-(1,2-dicarboxyethyl)-AMP + GDP + phosphate + 2 H(+). Its pathway is purine metabolism; AMP biosynthesis via de novo pathway; AMP from IMP: step 1/2. Functionally, plays an important role in the salvage pathway for purine nucleotide biosynthesis. Catalyzes the first committed step in the biosynthesis of AMP from IMP. The protein is Adenylosuccinate synthetase (Adss) of Plasmodium falciparum (isolate 3D7).